Here is a 152-residue protein sequence, read N- to C-terminus: Protein Turandot X (152 aa).

Positions 1–22 (MGFYISSLLICVFLGIVRFASA) are cleaved as a signal peptide.

This sequence belongs to the Turandot family.

The protein localises to the secreted. Its function is as follows. A humoral factor that may play a role in stress tolerance. The sequence is that of Protein Turandot X from Drosophila erecta (Fruit fly).